The following is a 518-amino-acid chain: Putative ribose/galactose/methyl galactoside import ATP-binding protein (518 aa).

Residues 1 to 22 (MSIAVLDRPMSRQDTPSASSVP) form a disordered region. The span at 12 to 22 (RQDTPSASSVP) shows a compositional bias: polar residues. ABC transporter domains follow at residues 29 to 265 (LEVR…VGRE) and 275 to 515 (VPIG…VMEL). Position 61-68 (61-68 (GENGAGKS)) interacts with ATP.

This sequence belongs to the ABC transporter superfamily. Carbohydrate importer 2 (CUT2) (TC 3.A.1.2) family.

It is found in the cell inner membrane. It catalyses the reaction D-ribose(out) + ATP + H2O = D-ribose(in) + ADP + phosphate + H(+). The enzyme catalyses D-galactose(out) + ATP + H2O = D-galactose(in) + ADP + phosphate + H(+). Part of an ABC transporter complex involved in carbohydrate import. Could be involved in ribose, galactose and/or methyl galactoside import. Responsible for energy coupling to the transport system. The polypeptide is Putative ribose/galactose/methyl galactoside import ATP-binding protein (Ralstonia nicotianae (strain ATCC BAA-1114 / GMI1000) (Ralstonia solanacearum)).